The primary structure comprises 204 residues: Holliday junction branch migration complex subunit RuvA (204 aa).

The interval 1–64 (MIGKLKGTID…EDQLKLFGFM (64 aa)) is domain I. Residues 65–143 (TALEREWFNL…AFAGEAINIA (79 aa)) form a domain II region. Residues 144-151 (LKQELGEG) are flexible linker. The tract at residues 152 to 204 (VAAAPVADAVSALTNLGYSRDQAANAVAAAMKTAGDGADSAKLIRLGLKELAR) is domain III.

It belongs to the RuvA family. In terms of assembly, homotetramer. Forms an RuvA(8)-RuvB(12)-Holliday junction (HJ) complex. HJ DNA is sandwiched between 2 RuvA tetramers; dsDNA enters through RuvA and exits via RuvB. An RuvB hexamer assembles on each DNA strand where it exits the tetramer. Each RuvB hexamer is contacted by two RuvA subunits (via domain III) on 2 adjacent RuvB subunits; this complex drives branch migration. In the full resolvosome a probable DNA-RuvA(4)-RuvB(12)-RuvC(2) complex forms which resolves the HJ.

Its subcellular location is the cytoplasm. Its function is as follows. The RuvA-RuvB-RuvC complex processes Holliday junction (HJ) DNA during genetic recombination and DNA repair, while the RuvA-RuvB complex plays an important role in the rescue of blocked DNA replication forks via replication fork reversal (RFR). RuvA specifically binds to HJ cruciform DNA, conferring on it an open structure. The RuvB hexamer acts as an ATP-dependent pump, pulling dsDNA into and through the RuvAB complex. HJ branch migration allows RuvC to scan DNA until it finds its consensus sequence, where it cleaves and resolves the cruciform DNA. This chain is Holliday junction branch migration complex subunit RuvA, found in Rhizobium etli (strain CIAT 652).